A 175-amino-acid polypeptide reads, in one-letter code: Zinc metalloproteinase-disintegrin-like catroriarin (175 aa).

The Disintegrin domain maps to 1–63 (NPCCDAATCK…ECPADVFHKN (63 aa)). Intrachain disulfides connect Cys-3-Cys-26, Cys-17-Cys-23, Cys-22-Cys-48, Cys-35-Cys-55, Cys-42-Cys-74, Cys-67-Cys-79, Cys-101-Cys-147, Cys-114-Cys-124, and Cys-131-Cys-171. A D/ECD-tripeptide motif is present at residues 41 to 43 (ECD). Asp-43, Pro-44, Glu-46, Asp-58, and Val-59 together coordinate Ca(2+).

Belongs to the venom metalloproteinase (M12B) family. P-III subfamily. P-IIIa sub-subfamily. In terms of assembly, monomer. The cofactor is Zn(2+). Post-translationally, glycosylated. As to expression, expressed by the venom gland.

The protein resides in the secreted. Snake venom metalloproteinase that impairs hemostasis in the envenomed animal. This Crotalus atrox (Western diamondback rattlesnake) protein is Zinc metalloproteinase-disintegrin-like catroriarin.